Here is an 80-residue protein sequence, read N- to C-terminus: Defensin-like protein 14 (80 aa).

An N-terminal signal peptide occupies residues 1–29 (MAKSAAIITFLFAALVLFAAFEAPIMVEA). A Pyrrolidone carboxylic acid modification is found at Gln30. 4 disulfide bridges follow: Cys33–Cys80, Cys44–Cys65, Cys50–Cys74, and Cys54–Cys76.

The protein belongs to the DEFL family.

The protein resides in the secreted. Its function is as follows. Confers broad-spectrum resistance to pathogens. Has antifungal activity in vitro. In Arabidopsis thaliana (Mouse-ear cress), this protein is Defensin-like protein 14 (PDF1.3).